We begin with the raw amino-acid sequence, 307 residues long: Streptomycin 6-kinase (307 aa).

Residue 133 to 145 participates in streptomycin binding; the sequence is LAGLLARLVSVPA. Asp201 acts as the Proton acceptor in catalysis.

Belongs to the aminoglycoside phosphotransferase family.

The catalysed reaction is streptomycin + ATP = streptomycin 6-phosphate + ADP + H(+). Functionally, the aminoglycoside phosphotransferases achieve inactivation of their antibiotic substrates by phosphorylation. The chain is Streptomycin 6-kinase (sph) from Streptomyces glaucescens.